The chain runs to 194 residues: FK506-binding protein 3 (194 aa).

A signal peptide spans 1–19 (MNKFLIALLVLATLAVSFS). The region spanning 44–133 (GDYISLKYVG…YFDLEVVSIE (90 aa)) is the PPIase FKBP-type domain. The chain crosses the membrane as a helical span at residues 148–168 (VGTIIAFSMLAGFIVLVKFII). The disordered stretch occupies residues 173-194 (DESNSKKPAPGKPKKTKAAKQN). The segment covering 184–194 (KPKKTKAAKQN) has biased composition (basic residues).

This sequence belongs to the FKBP-type PPIase family.

It localises to the membrane. It carries out the reaction [protein]-peptidylproline (omega=180) = [protein]-peptidylproline (omega=0). Its activity is regulated as follows. Inhibited by both FK506 and rapamycin. In terms of biological role, PPIases accelerate the folding of proteins by catalyzing the cis-trans isomerization of proline imidic peptide bonds in oligopeptides. The polypeptide is FK506-binding protein 3 (fkbp3) (Dictyostelium discoideum (Social amoeba)).